A 781-amino-acid chain; its full sequence is Mitochondrial inner membrane m-AAA protease component paraplegin (781 aa).

Residues 1-43 (MAAALLLLRALRQSPEPGPWRLWAQLSGRSPGLFSGAGGRRPY) constitute a mitochondrion transit peptide. A propeptide spans 44–105 (VVRGTPIGLA…GSTLYFNTSG (62 aa)) (removed in mature form). Positions 105 to 134 (GLKQKNKDDDKPKGKAPEDDEEERRRKERE) are disordered. At 106-144 (LKQKNKDDDKPKGKAPEDDEEERRRKEREDQMYRERLRT) the chain is on the mitochondrial matrix side. Over residues 109 to 134 (KNKDDDKPKGKAPEDDEEERRRKERE) the composition is skewed to basic and acidic residues. Residues 145-165 (LFIIAIVMSLLNSLSTSGGSI) form a helical membrane-spanning segment. The Mitochondrial intermembrane portion of the chain corresponds to 166 to 248 (SWADFVNEML…DRIPVSYKRT (83 aa)). Residues 249-269 (GFFGNALYALGMTAVGLAILW) form a helical membrane-spanning segment. Over 270 to 781 (YVFRLAGMTG…ASGEEEAPAP (512 aa)) the chain is Mitochondrial matrix. Residues alanine 312, glycine 352, cysteine 353, glycine 354, lysine 355, threonine 356, and leucine 357 each coordinate ATP. At tyrosine 505 the chain carries 3'-nitrotyrosine. Histidine 574 serves as a coordination point for Zn(2+). The active site involves glutamate 575. Residues histidine 578 and aspartate 650 each contribute to the Zn(2+) site. The segment at 701-781 (HEARLLVARA…ASGEEEAPAP (81 aa)) is interaction with PPIF.

This sequence in the N-terminal section; belongs to the AAA ATPase family. The protein in the C-terminal section; belongs to the peptidase M41 family. As to quaternary structure, forms heterooligomers with AFG3L2; the m-AAA protease is composed of heterohexamers of AFG3L2 and SPG7. Component of the mitochondrial permeability transition pore complex (mPTPC), at least composed of SPG7, VDAC1 and PPIF. Interacts with MAIP1. Zn(2+) is required as a cofactor. In terms of processing, upon import into the mitochondrion, the N-terminal transit peptide is cleaved by the mitochondrial-processing peptidase (MPP) to generate an intermediate form which undergoes a second proteolytic cleavage mediated by proteases AFG3L2 removing an additional N-terminal fragment to generate the proteolytically active mature form.

The protein resides in the mitochondrion inner membrane. It carries out the reaction ATP + H2O = ADP + phosphate + H(+). In terms of biological role, catalytic component of the m-AAA protease, a protease that plays a key role in proteostasis of inner mitochondrial membrane proteins, and which is essential for axonal and neuron development. SPG7 possesses both ATPase and protease activities: the ATPase activity is required to unfold substrates, threading them into the internal proteolytic cavity for hydrolysis into small peptide fragments. The m-AAA protease exerts a dual role in the mitochondrial inner membrane: it mediates the processing of specific regulatory proteins and ensures protein quality control by degrading misfolded polypeptides. Mediates protein maturation of the mitochondrial ribosomal subunit MRPL32/bL32m by catalyzing the cleavage of the presequence of MRPL32/bL32m prior to assembly into the mitochondrial ribosome. Acts as a regulator of calcium in neurons by mediating degradation of SMDT1/EMRE before its assembly with the uniporter complex, limiting the availability of SMDT1/EMRE for MCU assembly and promoting efficient assembly of gatekeeper subunits with MCU. Also regulates mitochondrial calcium by catalyzing degradation of MCU. Plays a role in the formation and regulation of the mitochondrial permeability transition pore (mPTP) and its proteolytic activity is dispensable for this function. The sequence is that of Mitochondrial inner membrane m-AAA protease component paraplegin (Spg7) from Rattus norvegicus (Rat).